A 480-amino-acid polypeptide reads, in one-letter code: RNA-binding protein 42 (480 aa).

The disordered stretch occupies residues 1-30 (MAGAGPAPGLPGAGGPVVPGPGAGIPGKSG). Ala-2 bears the N-acetylalanine mark. A compositionally biased stretch (gly residues) spans 11–27 (PGAGGPVVPGPGAGIPG). Position 135 is a phosphoserine (Ser-135). 4 positions are modified to asymmetric dimethylarginine: Arg-153, Arg-158, Arg-168, and Arg-181. The segment at 236-480 (ELGLGLGLGL…QKEKKKLGLR (245 aa)) is necessary for interaction with HNRNPK. Positions 319–356 (SLRPRPRPPRPEPPPGLMALEVPEPLGEDKKKGKPEKL) are disordered. The span at 345-356 (GEDKKKGKPEKL) shows a compositional bias: basic and acidic residues. Positions 381 to 459 (FRIFCGDLGN…RPIKLRKSMW (79 aa)) constitute an RRM domain.

The protein belongs to the RRM RBM42 family. In terms of assembly, interacts with HNRNPK.

Its subcellular location is the nucleus. The protein resides in the cytoplasm. In terms of biological role, binds (via the RRM domain) to the 3'-untranslated region (UTR) of CDKN1A mRNA. The sequence is that of RNA-binding protein 42 (RBM42) from Homo sapiens (Human).